Reading from the N-terminus, the 396-residue chain is Putative cystathionine beta-lyase (396 aa).

An N6-(pyridoxal phosphate)lysine modification is found at K210.

This sequence belongs to the trans-sulfuration enzymes family. The cofactor is pyridoxal 5'-phosphate.

The catalysed reaction is L,L-cystathionine + H2O = L-homocysteine + pyruvate + NH4(+). It carries out the reaction an S-substituted L-cysteine + H2O = a thiol + pyruvate + NH4(+). It participates in amino-acid biosynthesis; L-methionine biosynthesis via de novo pathway; L-homocysteine from L-cystathionine: step 1/1. Its function is as follows. Catalyzes the cleavage of cystathionine to homocysteine, pyruvate and ammonia during methionine biosynthesis. The sequence is that of Putative cystathionine beta-lyase (metC) from Rhizobium johnstonii (strain DSM 114642 / LMG 32736 / 3841) (Rhizobium leguminosarum bv. viciae).